The sequence spans 111 residues: MKKRNISLKSKIEIQKIFKEGNLIRFSNLNLKMFFKSNNLIYSRLLVTFSKGFRGSVKRNRVRRLFKEAFRKRLELLEGRAVDIIFVVSYNRLNLTYFRIESLIKNLVLMV.

The protein belongs to the RnpA family. In terms of assembly, consists of a catalytic RNA component (M1 or rnpB) and a protein subunit.

It catalyses the reaction Endonucleolytic cleavage of RNA, removing 5'-extranucleotides from tRNA precursor.. RNaseP catalyzes the removal of the 5'-leader sequence from pre-tRNA to produce the mature 5'-terminus. It can also cleave other RNA substrates such as 4.5S RNA. The protein component plays an auxiliary but essential role in vivo by binding to the 5'-leader sequence and broadening the substrate specificity of the ribozyme. The polypeptide is Ribonuclease P protein component (Borrelia garinii subsp. bavariensis (strain ATCC BAA-2496 / DSM 23469 / PBi) (Borreliella bavariensis)).